The sequence spans 214 residues: Pyridoxine/pyridoxamine 5'-phosphate oxidase (214 aa).

Residues 10–13 (RLNY) and lysine 68 each bind substrate. FMN contacts are provided by residues 63-68 (RMVLLK), 78-79 (YT), lysine 85, and glutamine 107. Residues tyrosine 125, arginine 129, and serine 133 each coordinate substrate. FMN contacts are provided by residues 142–143 (QS) and tryptophan 187. 193-195 (RLH) lines the substrate pocket. Position 197 (arginine 197) interacts with FMN.

Belongs to the pyridoxamine 5'-phosphate oxidase family. Homodimer. Requires FMN as cofactor.

The catalysed reaction is pyridoxamine 5'-phosphate + O2 + H2O = pyridoxal 5'-phosphate + H2O2 + NH4(+). The enzyme catalyses pyridoxine 5'-phosphate + O2 = pyridoxal 5'-phosphate + H2O2. The protein operates within cofactor metabolism; pyridoxal 5'-phosphate salvage; pyridoxal 5'-phosphate from pyridoxamine 5'-phosphate: step 1/1. It participates in cofactor metabolism; pyridoxal 5'-phosphate salvage; pyridoxal 5'-phosphate from pyridoxine 5'-phosphate: step 1/1. Functionally, catalyzes the oxidation of either pyridoxine 5'-phosphate (PNP) or pyridoxamine 5'-phosphate (PMP) into pyridoxal 5'-phosphate (PLP). The chain is Pyridoxine/pyridoxamine 5'-phosphate oxidase from Synechocystis sp. (strain ATCC 27184 / PCC 6803 / Kazusa).